Consider the following 181-residue polypeptide: MAAAREAEKKEEGQKQVKLYAIIRIRGRVDVHPDVEYTLKLLRLHRKFHLVLYPSTLPGIERMIHKVKDWVTWGEIDRDTLVELLRRRGRISGNKPLTDEYVQEKLGLKGGIEELADKLLKGEIMLHKLYDKQKKIWIIKPVFRLHPPRGGFKGSIKKPYGAGGELGYRGPAINELIRRML.

This sequence belongs to the universal ribosomal protein uL30 family. In terms of assembly, part of the 50S ribosomal subunit.

The chain is Large ribosomal subunit protein uL30 from Hyperthermus butylicus (strain DSM 5456 / JCM 9403 / PLM1-5).